The following is a 562-amino-acid chain: Potassium-transporting ATPase potassium-binding subunit (562 aa).

The next 12 helical transmembrane spans lie at 6-26 (FLLI…LGSF), 62-82 (YALA…ALLM), 132-152 (GLAV…FALI), 170-190 (VFRI…LFFV), 253-273 (FVQM…FGQV), 283-303 (LIWA…YAEL), 327-347 (FGIL…CGAV), 356-376 (ALGG…FGGV), 379-399 (GLYG…LMIG), 416-436 (MTAL…ALAI), 483-503 (LLLA…VLAI), and 526-546 (LFIG…FVPA).

This sequence belongs to the KdpA family. In terms of assembly, the system is composed of three essential subunits: KdpA, KdpB and KdpC.

It localises to the cell inner membrane. Part of the high-affinity ATP-driven potassium transport (or Kdp) system, which catalyzes the hydrolysis of ATP coupled with the electrogenic transport of potassium into the cytoplasm. This subunit binds the periplasmic potassium ions and delivers the ions to the membrane domain of KdpB through an intramembrane tunnel. The protein is Potassium-transporting ATPase potassium-binding subunit of Serratia proteamaculans (strain 568).